We begin with the raw amino-acid sequence, 380 residues long: Cystathionine gamma-synthase (380 aa).

Lys195 bears the N6-(pyridoxal phosphate)lysine mark.

It belongs to the trans-sulfuration enzymes family. As to quaternary structure, homotetramer. Pyridoxal 5'-phosphate is required as a cofactor.

Its subcellular location is the cytoplasm. The catalysed reaction is O-succinyl-L-homoserine + L-cysteine = L,L-cystathionine + succinate + H(+). In terms of biological role, catalyzes the formation of L-cystathionine from O-succinyl-L-homoserine (OSHS) and L-cysteine, via a gamma-replacement reaction. In the absence of thiol, catalyzes gamma-elimination to form 2-oxobutanoate, succinate and ammonia. This chain is Cystathionine gamma-synthase (metB), found in Helicobacter pylori (strain ATCC 700392 / 26695) (Campylobacter pylori).